Reading from the N-terminus, the 191-residue chain is Peptidyl-tRNA hydrolase (191 aa).

Y17 is a binding site for tRNA. The active-site Proton acceptor is H22. Residues Y68, N70, and N116 each contribute to the tRNA site.

Belongs to the PTH family. As to quaternary structure, monomer.

The protein localises to the cytoplasm. The enzyme catalyses an N-acyl-L-alpha-aminoacyl-tRNA + H2O = an N-acyl-L-amino acid + a tRNA + H(+). Its function is as follows. Hydrolyzes ribosome-free peptidyl-tRNAs (with 1 or more amino acids incorporated), which drop off the ribosome during protein synthesis, or as a result of ribosome stalling. Functionally, catalyzes the release of premature peptidyl moieties from peptidyl-tRNA molecules trapped in stalled 50S ribosomal subunits, and thus maintains levels of free tRNAs and 50S ribosomes. The sequence is that of Peptidyl-tRNA hydrolase from Mycobacterium marinum (strain ATCC BAA-535 / M).